A 158-amino-acid chain; its full sequence is MSEKKHIMTYEGVKKLEDELEYLKTVKRKEITEKIKVALGYGDLSENSEYDEAKNEQAFTEGRIIQLENMLKNAVVVDESEISTDIVTVGSIVKVMDFDFDEEVEYSIVGSAEADPMNFKISNESPVGEGLMGKKVGDVVEIEVPGGTTKFEVLGIRR.

Residues 47–74 (NSEYDEAKNEQAFTEGRIIQLENMLKNA) adopt a coiled-coil conformation.

Belongs to the GreA/GreB family.

Its function is as follows. Necessary for efficient RNA polymerase transcription elongation past template-encoded arresting sites. The arresting sites in DNA have the property of trapping a certain fraction of elongating RNA polymerases that pass through, resulting in locked ternary complexes. Cleavage of the nascent transcript by cleavage factors such as GreA or GreB allows the resumption of elongation from the new 3'terminus. GreA releases sequences of 2 to 3 nucleotides. This is Transcription elongation factor GreA from Clostridium perfringens (strain ATCC 13124 / DSM 756 / JCM 1290 / NCIMB 6125 / NCTC 8237 / Type A).